Reading from the N-terminus, the 982-residue chain is MDRKSWPWKKKSSEKTATVTEVVDQENGKKPSYIQISFDQYTNLNGLKDEVKSYEEKVTKLEDQIKDLDLKLSTANADIVAKEVLVKQHSKVAEEAVTGWEKAEAEASALKTHLETITLAKLTVEDRAAHLDGALKECMRQIRSLKEENEQKLHDVIATKTNQMDNLRAEFESRIGEYEEELLRCGAENDALSRSLQERSNMLMRISEEKSQAESEIEHLKNNIESCEREINTLKYETHVITKELEIRNEEKNMSMRSAEAANKQHLEGVKKIAKLEAECQRLRTLVRKKLPGPAALAQMKMEVESLGFGDHRQDHRQRRSPVRPSSPLMSPMSHMSQVSEFSLDNMQKFHKENDLLTERLLAMEEETKMLKEALAKRNSELQVSRNLCAKTANRLQTLEAQMMSKSPTKRGFEMPAEIFSRQNASNPPSMASMSEDGNEDARSVAGSLMSELSQSNKDKANAKIKKTESANQLELMDDFLEMEKLACLPNGSNANGSTDHSSADSDAEIPPATQLKKRISNVLQSLPKDAAFEKILAEIQCAVKDAGVKLPSKSHGANLNGLTEEKVIAMSNETTEEKVTIVEVITQELSDALSQIYQFVTYLSKEATACSENRTFSQKVQEFSTTFEGVLGKEKTLVDFLFDLSRVLVEASELKIDVLGFHTSTVEIHSPDCIDKVALPENKALQKDSSGEHYQNGCSQSSDSEIPDDCNGTSGYEPKLATCKFTTEEFEGLKLEKEKAESNLASCEADLEATKTKLQETEKLLAEVKSDLESAQKSNGMGETQLKCMVESYRSLETRSSELEIELTSLKGKIENLEDELHDEKENHREALAKCQELEEQLQRNNQNCPNCSVIEDDPKSKQDNELAAAAEKLAECQETILLLGKQLKSMCPQTEQVASSPSQEQQALNPEEEEYATSTNPQDSKLSSPSDKDTPSMNTMKSPVASKHRHTKSNSSSSSSGLTPEKHSRGFSRFFSTKAK.

Coiled-coil stretches lie at residues 39-83 and 125-291; these read DQYT…VAKE and EDRA…RKKL. The tract at residues 311 to 333 is disordered; it reads DHRQDHRQRRSPVRPSSPLMSPM. Over residues 323-333 the composition is skewed to low complexity; sequence VRPSSPLMSPM. The stretch at 345 to 401 forms a coiled coil; it reads DNMQKFHKENDLLTERLLAMEEETKMLKEALAKRNSELQVSRNLCAKTANRLQTLEA. The segment covering 423–433 has biased composition (polar residues); sequence QNASNPPSMAS. Disordered stretches follow at residues 423–466 and 687–711; these read QNAS…AKIK and QKDS…PDDC. Residues 452-475 adopt a coiled-coil conformation; that stretch reads ELSQSNKDKANAKIKKTESANQLE. Residues 457–466 are compositionally biased toward basic and acidic residues; that stretch reads NKDKANAKIK. Over residues 693–705 the composition is skewed to polar residues; sequence EHYQNGCSQSSDS. Positions 722–885 form a coiled coil; sequence ATCKFTTEEF…AECQETILLL (164 aa). Polar residues-rich tracts occupy residues 896 to 910 and 918 to 943; these read TEQV…QQAL and ATST…NTMK. Positions 896 to 982 are disordered; sequence TEQVASSPSQ…FSRFFSTKAK (87 aa).

The protein belongs to the FPP family. As to quaternary structure, interacts with WPP/MAF proteins.

The polypeptide is Filament-like plant protein 4 (FPP4) (Arabidopsis thaliana (Mouse-ear cress)).